Here is a 176-residue protein sequence, read N- to C-terminus: NAD(P)H-quinone oxidoreductase subunit 6, chloroplastic (176 aa).

Helical transmembrane passes span phenylalanine 10–threonine 30, proline 32–leucine 52, alanine 61–methionine 81, valine 95–isoleucine 115, and phenylalanine 152–serine 172.

The protein belongs to the complex I subunit 6 family. NDH is composed of at least 16 different subunits, 5 of which are encoded in the nucleus.

Its subcellular location is the plastid. It localises to the chloroplast thylakoid membrane. It carries out the reaction a plastoquinone + NADH + (n+1) H(+)(in) = a plastoquinol + NAD(+) + n H(+)(out). The enzyme catalyses a plastoquinone + NADPH + (n+1) H(+)(in) = a plastoquinol + NADP(+) + n H(+)(out). Functionally, NDH shuttles electrons from NAD(P)H:plastoquinone, via FMN and iron-sulfur (Fe-S) centers, to quinones in the photosynthetic chain and possibly in a chloroplast respiratory chain. The immediate electron acceptor for the enzyme in this species is believed to be plastoquinone. Couples the redox reaction to proton translocation, and thus conserves the redox energy in a proton gradient. The polypeptide is NAD(P)H-quinone oxidoreductase subunit 6, chloroplastic (ndhG) (Aethionema grandiflorum (Persian stone-cress)).